A 124-amino-acid polypeptide reads, in one-letter code: V-type proton ATPase subunit F (124 aa).

The protein belongs to the V-ATPase F subunit family. V-ATPase is a heteromultimeric enzyme composed of a peripheral catalytic V1 complex (components A to H) attached to an integral membrane V0 proton pore complex (components: a, c, c', c'', d, e, f and VOA1).

It localises to the vacuole membrane. In terms of biological role, subunit of the V1 complex of vacuolar(H+)-ATPase (V-ATPase), a multisubunit enzyme composed of a peripheral complex (V1) that hydrolyzes ATP and a membrane integral complex (V0) that translocates protons. V-ATPase is responsible for acidifying and maintaining the pH of intracellular compartments. In Neurospora crassa (strain ATCC 24698 / 74-OR23-1A / CBS 708.71 / DSM 1257 / FGSC 987), this protein is V-type proton ATPase subunit F (vma-7).